The following is a 119-amino-acid chain: Ribosome-binding factor A (119 aa).

It belongs to the RbfA family. In terms of assembly, monomer. Binds 30S ribosomal subunits, but not 50S ribosomal subunits or 70S ribosomes.

It localises to the cytoplasm. Its function is as follows. One of several proteins that assist in the late maturation steps of the functional core of the 30S ribosomal subunit. Associates with free 30S ribosomal subunits (but not with 30S subunits that are part of 70S ribosomes or polysomes). Required for efficient processing of 16S rRNA. May interact with the 5'-terminal helix region of 16S rRNA. The protein is Ribosome-binding factor A of Buchnera aphidicola subsp. Acyrthosiphon pisum (strain Tuc7).